A 204-amino-acid polypeptide reads, in one-letter code: ATP-dependent Clp protease proteolytic subunit (204 aa).

The active-site Nucleophile is serine 101. Histidine 126 is a catalytic residue.

This sequence belongs to the peptidase S14 family. Component of the chloroplastic Clp protease core complex.

The protein resides in the plastid. Its subcellular location is the chloroplast stroma. The enzyme catalyses Hydrolysis of proteins to small peptides in the presence of ATP and magnesium. alpha-casein is the usual test substrate. In the absence of ATP, only oligopeptides shorter than five residues are hydrolyzed (such as succinyl-Leu-Tyr-|-NHMec, and Leu-Tyr-Leu-|-Tyr-Trp, in which cleavage of the -Tyr-|-Leu- and -Tyr-|-Trp bonds also occurs).. Functionally, cleaves peptides in various proteins in a process that requires ATP hydrolysis. Has a chymotrypsin-like activity. Plays a major role in the degradation of misfolded proteins. This is ATP-dependent Clp protease proteolytic subunit from Phalaenopsis aphrodite subsp. formosana (Moth orchid).